Here is a 207-residue protein sequence, read N- to C-terminus: Abscisic acid receptor PYL9 (207 aa).

Residues 31–197 (FPPSTTTATT…NLQMLAAVAE (167 aa)) are START-like. Abscisate contacts are provided by residues K74, 104–109 (ASTSTE), 131–137 (RLRNYRS), and E162. The short motif at 100–104 (SGLPA) is the Gate loop element. A Latch loop motif is present at residues 130–132 (HRL).

The protein belongs to the PYR/PYL/RCAR abscisic acid intracellular receptor family. In terms of assembly, homodimer. Interacts with PP2C06. Interacts with PP2C50. Binding to PP2C50 is dependent on the presence of abscisic acid (ABA). Interacts with PP2C30 and PP2C53. Binding to PP2C30 and PP2C53 is dependent on the presence of ABA.

It is found in the cytoplasm. The protein localises to the cytosol. It localises to the nucleus. In terms of biological role, involved in abscisic acid (ABA) signaling during seed germination and abiotic stress response. Acts as a positive regulator of ABA-mediated inhibition of seed germination, and tolerance to drought and cold stresses. Inhibits the activity of the protein phosphatases PP2C06 and PP2C09 when activated by abscisic acid (ABA). This is Abscisic acid receptor PYL9 from Oryza sativa subsp. japonica (Rice).